The chain runs to 326 residues: MSANLKYLSLGILVFQTTSLVLTMRYSRTLKEEGPRYLSSTAVVVAELLKIMACILLVYKDSKCSLRALNRILHDEILNKPMETLKLAIPSGIYTLQNNLLYVALSNLDAATYQVTYQLKILTTALFSVSMLSKKLGVYQWLSLVILMTGVAFVQWPSDSQELNSKELSAGSQFVGLMAVLTACFSSGFAGVYFEKILKETKQSVWIRNIQLGFFGSIFGLMGVYVYDGELVSKNGFFQGYNRLTWIVVVLQALGGLVIAAVIKYADNILKGFATSLSIILSTLISYFWLQDFVPTSVFFLGAILVITATFLYGYDPKPAGNPTKA.

A run of 8 helical transmembrane segments spans residues 4–24 (NLKY…VLTM), 38–58 (LSST…ILLV), 136–156 (LGVY…FVQW), 174–194 (FVGL…GVYF), 212–232 (LGFF…GELV), 244–264 (LTWI…AVIK), 269–289 (ILKG…SYFW), and 293–313 (FVPT…TFLY).

Belongs to the nucleotide-sugar transporter family. SLC35A subfamily. In terms of assembly, interacts with SLC35A2; the interaction is reduced in the presence of SLC35A4. Found in a complex with SLC35A2 and SLC35A4. Interacts with MGAT4B. Post-translationally, O-Glcnacylation regulates the stability of SLC35A3 and the specific complex formation with MGAT4B.

Its subcellular location is the golgi apparatus membrane. It catalyses the reaction UMP(out) + UDP-N-acetyl-alpha-D-glucosamine(in) = UMP(in) + UDP-N-acetyl-alpha-D-glucosamine(out). Transports diphosphate-N-acetylglucosamine (UDP-GlcNAc) from the cytosol into the lumen of the Golgi apparatus, functioning as an antiporter that exchanges UDP-N-acetyl-alpha-D-glucosamine for UMP. May supply UDP-GlcNAc as substrate for Golgi-resident glycosyltransferases that generate highly branched, multiantennary complex N-glycans and keratan sulfate. However, the exact role of SLC35A3 still needs to be elucidated, it could be a member of a catalytically more efficient multiprotein complex rather than function independently as a single transporter. The sequence is that of UDP-N-acetylglucosamine transporter (SLC35A3) from Bos taurus (Bovine).